A 298-amino-acid chain; its full sequence is 5,10-methylenetetrahydrofolate reductase (298 aa).

Catalysis depends on Glu-28, which acts as the Proton donor/acceptor. Thr-59 serves as a coordination point for NADH. 13 residues coordinate FAD: Tyr-60, Ala-62, His-88, Arg-118, Gly-119, Asp-120, Ala-132, Tyr-152, His-156, Ala-159, Asp-165, Asn-168, and Lys-172. Asp-120 is a (6S)-5-methyl-5,6,7,8-tetrahydrofolate binding site. Gln-183 serves as a coordination point for NADH. Residues Gln-183, Gln-219, and Arg-279 each contribute to the (6S)-5-methyl-5,6,7,8-tetrahydrofolate site.

Belongs to the methylenetetrahydrofolate reductase family. Requires FAD as cofactor.

It catalyses the reaction (6S)-5-methyl-5,6,7,8-tetrahydrofolate + NAD(+) = (6R)-5,10-methylene-5,6,7,8-tetrahydrofolate + NADH + H(+). Its pathway is one-carbon metabolism; tetrahydrofolate interconversion. It functions in the pathway amino-acid biosynthesis; L-methionine biosynthesis via de novo pathway. Catalyzes the NADH-dependent reduction of 5,10-methylenetetrahydrofolate to 5-methyltetrahydrofolate. Is required to provide the methyl group necessary for methionine synthetase to convert homocysteine to methionine; the methyl group is given by 5-methyltetrahydrofolate. The sequence is that of 5,10-methylenetetrahydrofolate reductase (metF) from Pectobacterium carotovorum subsp. carotovorum (Erwinia carotovora subsp. carotovora).